We begin with the raw amino-acid sequence, 162 residues long: Large ribosomal subunit protein bL17 (162 aa).

The tract at residues 126–162 (KKEEVKTKSRRGGKAKKAEPTTEAPANTTEETTDSAE) is disordered. Low complexity predominate over residues 146–155 (TTEAPANTTE).

It belongs to the bacterial ribosomal protein bL17 family. In terms of assembly, part of the 50S ribosomal subunit. Contacts protein L32.

The polypeptide is Large ribosomal subunit protein bL17 (Flavobacterium psychrophilum (strain ATCC 49511 / DSM 21280 / CIP 103535 / JIP02/86)).